The following is a 442-amino-acid chain: Syndecan-3 (442 aa).

Disordered regions lie at residues 1 to 24 (MKPGPPHRAGAAHGAGAGAGAAAG) and 57 to 87 (RPVDLEGSGDDDSFPDDELDDLYSGSGSGYF). Residues 1–387 (MKPGPPHRAG…SILERKEVLV (387 aa)) lie on the Extracellular side of the membrane. Positions 13–24 (HGAGAGAGAAAG) are enriched in gly residues. A compositionally biased stretch (acidic residues) spans 63–77 (GSGDDDSFPDDELDD). Residues serine 80, serine 82, serine 84, and serine 91 are each glycosylated (O-linked (Xyl...) (glycosaminoglycan) serine). O-linked (GalNAc) serine; by GALNT13 glycosylation occurs at serine 108. Threonine 109 and threonine 110 each carry an O-linked (GalNAc) threonine; by GALNT13 glycan. Disordered regions lie at residues 150–173 (EEPSQRATTVSTTMATTAATSTGD), 225–326 (TTPE…ETTQ), and 340–367 (AAKASSPPGTLPKGARPGPGLLDNAIDS). Composition is skewed to low complexity over residues 156-173 (ATTVSTTMATTAATSTGD), 225-238 (TTPEAPSPPTTAAV), and 275-286 (TLPLGTTAPGPT). A glycan (O-linked (GalNAc) serine; by GALNT13) is linked at serine 160. 3 O-linked (GalNAc) threonine; by GALNT13 glycosylation sites follow: threonine 161, threonine 162, and threonine 169. O-linked (GalNAc) serine; by GALNT13 glycosylation is present at serine 170. Residue threonine 171 is glycosylated (O-linked (GalNAc) threonine; by GALNT13). Positions 288 to 299 (VAQTPTPETFLT) are enriched in polar residues. 2 O-linked (Xyl...) (glycosaminoglycan) serine glycosylation sites follow: serine 314 and serine 367. Residues 388–408 (AVIVGGVVGALFAAFLVTLLI) form a helical membrane-spanning segment. A phosphotyrosine mark is found at tyrosine 409, tyrosine 419, tyrosine 431, and tyrosine 441. At 409-442 (YRMKKKDEGSYTLEEPKQASVTYQKPDKQEEFYA) the chain is on the cytoplasmic side. The disordered stretch occupies residues 419-442 (YTLEEPKQASVTYQKPDKQEEFYA). Over residues 433–442 (KPDKQEEFYA) the composition is skewed to basic and acidic residues.

It belongs to the syndecan proteoglycan family. Interacts with TIAM1. Interacts with PTN (via heparan sulfate chains); this interaction mediates the neurite outgrowth-promoting signal from PTN to the cytoskeleton of growing neurites; this interaction mediates osteoblast recruitment. Interacts with MDK; this interaction induces SDC3 clustering; this interaction induces neuronal cell adhesion and neurite outgrowth. O-glycosylated within the Thr/Ser-rich region which could interact with lectin domains on other molecules. Expressed in the nervous system, the adrenal gland, and the spleen.

Its subcellular location is the cell membrane. Its function is as follows. Cell surface proteoglycan that may bear heparan sulfate. May have a role in the organization of cell shape by affecting the actin cytoskeleton, possibly by transferring signals from the cell surface in a sugar-dependent mechanism. The sequence is that of Syndecan-3 (SDC3) from Homo sapiens (Human).